The chain runs to 282 residues: Acetyl-coenzyme A carboxylase carboxyl transferase subunit beta (282 aa).

The CoA carboxyltransferase N-terminal domain occupies 25–282 (VWRKCPHCNE…SQMLRIFMKQ (258 aa)). Zn(2+)-binding residues include Cys29, Cys32, Cys48, and Cys51. A C4-type zinc finger spans residues 29 to 51 (CPHCNEIIYAKEIERNLNVCPKC).

It belongs to the AccD/PCCB family. In terms of assembly, acetyl-CoA carboxylase is a heterohexamer composed of biotin carboxyl carrier protein (AccB), biotin carboxylase (AccC) and two subunits each of ACCase subunit alpha (AccA) and ACCase subunit beta (AccD). Zn(2+) serves as cofactor.

The protein localises to the cytoplasm. It catalyses the reaction N(6)-carboxybiotinyl-L-lysyl-[protein] + acetyl-CoA = N(6)-biotinyl-L-lysyl-[protein] + malonyl-CoA. It participates in lipid metabolism; malonyl-CoA biosynthesis; malonyl-CoA from acetyl-CoA: step 1/1. Component of the acetyl coenzyme A carboxylase (ACC) complex. Biotin carboxylase (BC) catalyzes the carboxylation of biotin on its carrier protein (BCCP) and then the CO(2) group is transferred by the transcarboxylase to acetyl-CoA to form malonyl-CoA. This Syntrophotalea carbinolica (strain DSM 2380 / NBRC 103641 / GraBd1) (Pelobacter carbinolicus) protein is Acetyl-coenzyme A carboxylase carboxyl transferase subunit beta.